Here is a 263-residue protein sequence, read N- to C-terminus: Small ribosomal subunit protein uS2 (263 aa).

Residues 223–246 (KSLLEQDSDANADEAEVSQEEKDA) are disordered. The span at 228-240 (QDSDANADEAEVS) shows a compositional bias: acidic residues.

It belongs to the universal ribosomal protein uS2 family.

This is Small ribosomal subunit protein uS2 from Campylobacter curvus (strain 525.92).